A 37-amino-acid chain; its full sequence is Large ribosomal subunit protein bL36c (37 aa).

The protein belongs to the bacterial ribosomal protein bL36 family.

The protein resides in the plastid. It is found in the chloroplast. In Nicotiana tomentosiformis (Tobacco), this protein is Large ribosomal subunit protein bL36c.